We begin with the raw amino-acid sequence, 567 residues long: Zinc finger protein 512 (567 aa).

A disordered region spans residues 1–34; sequence MSSRLGAVPATPGPTPFKQQRSTRIVGAKNSRTQ. Residues Lys18 and Lys84 each participate in a glycyl lysine isopeptide (Lys-Gly) (interchain with G-Cter in SUMO2) cross-link. A disordered region spans residues 87 to 148; the sequence is AASHVEGPGG…QTRRIRKEPP (62 aa). A compositionally biased stretch (basic residues) spans 119-130; sequence KKHKLYGRKQRP. The C2H2-type 1 zinc-finger motif lies at 197 to 220; it reads FTCHHCGKQLRSLAGMKYHVMANH. Lys227 is covalently cross-linked (Glycyl lysine isopeptide (Lys-Gly) (interchain with G-Cter in SUMO2)). A C2H2-type 2 zinc finger spans residues 287–310; sequence LKCHHCGKPYRSKAGLAYHLRSEH. Lys333 is covalently cross-linked (Glycyl lysine isopeptide (Lys-Gly) (interchain with G-Cter in SUMO2)). A C2H2-type 3; atypical zinc finger spans residues 406–430; the sequence is IQCPNQGCEAVYSSVSGLKAHLGSC. Residues 440-463 form a C2H2-type 3 zinc finger; it reads YKCLLCQKEFVSESGVKYHINSVH. Over residues 485–494 the composition is skewed to basic and acidic residues; it reads KQRQQEEEKR. The segment at 485 to 567 is disordered; it reads KQRQQEEEKR…PKTNHKRGKK (83 aa). Positions 495 to 508 are enriched in basic residues; sequence RQQHRSRRSLRRRQ. Basic and acidic residues predominate over residues 523–544; that stretch reads VGKDQRRNHEELLVATSRKEPE. Over residues 556 to 567 the composition is skewed to basic residues; sequence RSPKTNHKRGKK.

Belongs to the krueppel C2H2-type zinc-finger protein family.

The protein resides in the nucleus. Functionally, may be involved in transcriptional regulation. The protein is Zinc finger protein 512 (ZNF512) of Bos taurus (Bovine).